The following is a 179-amino-acid chain: MKGNQLSYDDPWSTAPAQPEPAPAPEPETAPSATVTTASAAVRDSMAVQHSTDGVSATFKFAGQYSDPWVVVKGADPADVLAKVNTAEFKALMDKVQQIAGHYAGSGGSAPANGGGGGQQQSRAPQAAQEAPGGEKRYCQHGEMVYKSGVSKKTGKPYALFSCTAPRDQQCDAQWPDKK.

Disordered stretches follow at residues 1–38 and 102–137; these read MKGNQLSYDDPWSTAPAQPEPAPAPEPETAPSATVTTA and HYAGSGGSAPANGGGGGQQQSRAPQAAQEAPGGEKR. The segment covering 18-28 has biased composition (pro residues); that stretch reads QPEPAPAPEPE. A compositionally biased stretch (low complexity) spans 29 to 38; that stretch reads TAPSATVTTA. Over residues 104–119 the composition is skewed to gly residues; that stretch reads AGSGGSAPANGGGGGQ. Residues 120 to 132 are compositionally biased toward low complexity; it reads QQSRAPQAAQEAP.

The sequence is that of Gene 49 protein (49) from Mycobacterium (Mycobacteriophage L5).